Consider the following 375-residue polypeptide: Trichodiene synthase (375 aa).

This sequence belongs to the trichodiene synthase family.

It carries out the reaction (2E,6E)-farnesyl diphosphate = trichodiene + diphosphate. Its pathway is sesquiterpene biosynthesis; trichothecene biosynthesis. In terms of biological role, TS is a member of the terpene cyclase group of enzymes. It catalyzes the isomerization and cyclization of farnesyl pyro-phosphate to form trichodiene, the first cyclic intermediate in the biosynthetic pathway for trichothecenes. It serves to branch trichothecene biosynthesis from the isoprenoid pathway. The protein is Trichodiene synthase (TRI5) of Gibberella zeae (strain ATCC MYA-4620 / CBS 123657 / FGSC 9075 / NRRL 31084 / PH-1) (Wheat head blight fungus).